A 396-amino-acid polypeptide reads, in one-letter code: Elongation factor Tu (396 aa).

The region spanning 10-206 is the tr-type G domain; the sequence is KLHVNVGTIG…ALDTHIPNPE (197 aa). The tract at residues 19 to 26 is G1; it reads GHVDHGKT. 19-26 is a GTP binding site; the sequence is GHVDHGKT. A Mg(2+)-binding site is contributed by Thr-26. The segment at 60-64 is G2; that stretch reads GITIS. The interval 81–84 is G3; the sequence is DCPG. GTP contacts are provided by residues 81 to 85 and 136 to 139; these read DCPGH and NKAD. The tract at residues 136 to 139 is G4; sequence NKAD. Residues 174 to 176 form a G5 region; sequence SAL.

It belongs to the TRAFAC class translation factor GTPase superfamily. Classic translation factor GTPase family. EF-Tu/EF-1A subfamily. Monomer.

The protein localises to the cytoplasm. The catalysed reaction is GTP + H2O = GDP + phosphate + H(+). Functionally, GTP hydrolase that promotes the GTP-dependent binding of aminoacyl-tRNA to the A-site of ribosomes during protein biosynthesis. This is Elongation factor Tu from Xylella fastidiosa (strain Temecula1 / ATCC 700964).